Consider the following 188-residue polypeptide: Peptidyl-tRNA hydrolase (188 aa).

Tyr-14 lines the tRNA pocket. His-19 acts as the Proton acceptor in catalysis. Positions 64, 66, and 113 each coordinate tRNA.

It belongs to the PTH family. In terms of assembly, monomer.

The protein localises to the cytoplasm. The enzyme catalyses an N-acyl-L-alpha-aminoacyl-tRNA + H2O = an N-acyl-L-amino acid + a tRNA + H(+). Functionally, hydrolyzes ribosome-free peptidyl-tRNAs (with 1 or more amino acids incorporated), which drop off the ribosome during protein synthesis, or as a result of ribosome stalling. In terms of biological role, catalyzes the release of premature peptidyl moieties from peptidyl-tRNA molecules trapped in stalled 50S ribosomal subunits, and thus maintains levels of free tRNAs and 50S ribosomes. This is Peptidyl-tRNA hydrolase from Chloroflexus aggregans (strain MD-66 / DSM 9485).